A 1319-amino-acid polypeptide reads, in one-letter code: DNA (cytosine-5)-methyltransferase CMT2 (1319 aa).

The segment covering 1–15 has biased composition (pro residues); sequence METPPPDPVSPPPPA. Disordered regions lie at residues 1–34, 142–189, 265–302, and 442–468; these read METPPPDPVSPPPPAADEGSPGGDDGAEDAGGFS, ALDS…VASS, SAASSMPLNQNGDSSRASKRRVADSRKSRSSEGSKLPA, and KSRVVSKTPQGRGRRSPQPPKTQRART. Polar residues predominate over residues 266–279; that stretch reads AASSMPLNQNGDSS. A compositionally biased stretch (basic and acidic residues) spans 285–296; that stretch reads RVADSRKSRSSE. In terms of domain architecture, BAH spans 602 to 719; that stretch reads YTFCIGECAF…IDYSTFSTIE (118 aa). In terms of domain architecture, SAM-dependent MTase C5-type spans 758 to 1296; the sequence is LSLLDLYCGC…YALAMAYLKK (539 aa). One can recognise a Chromo domain in the interval 863-928; it reads FEVWKLVDIC…EGHRQRILPR (66 aa). Cysteine 941 is a catalytic residue.

It localises to the nucleus. It catalyses the reaction a 2'-deoxycytidine in DNA + S-adenosyl-L-methionine = a 5-methyl-2'-deoxycytidine in DNA + S-adenosyl-L-homocysteine + H(+). Functionally, involved in CpXpG DNA methylation. This chain is DNA (cytosine-5)-methyltransferase CMT2, found in Oryza sativa subsp. japonica (Rice).